Consider the following 1032-residue polypeptide: uncharacterized protein (1032 aa).

Disordered stretches follow at residues 54–80 (NNNNNNNNNNNNNNNNNNNNNNNNNNN), 391–451 (QLQI…QTHL), and 884–934 (INNE…SKVK). Residues 884–907 (INNENNNENNNNYNGNINSNNNNN) show a composition bias toward low complexity.

This is an uncharacterized protein from Dictyostelium discoideum (Social amoeba).